Consider the following 338-residue polypeptide: DNA-directed RNA polymerase subunit alpha (338 aa).

Residues 1 to 234 (MIHKNWAELI…DQLSVFVNFD (234 aa)) form an alpha N-terminal domain (alpha-NTD) region. Residues 250-338 (FDPRLLKKVD…DLAKRFDDQF (89 aa)) are alpha C-terminal domain (alpha-CTD).

The protein belongs to the RNA polymerase alpha chain family. Homodimer. The RNAP catalytic core consists of 2 alpha, 1 beta, 1 beta' and 1 omega subunit. When a sigma factor is associated with the core the holoenzyme is formed, which can initiate transcription.

The catalysed reaction is RNA(n) + a ribonucleoside 5'-triphosphate = RNA(n+1) + diphosphate. In terms of biological role, DNA-dependent RNA polymerase catalyzes the transcription of DNA into RNA using the four ribonucleoside triphosphates as substrates. The protein is DNA-directed RNA polymerase subunit alpha of Paracoccus denitrificans (strain Pd 1222).